A 561-amino-acid chain; its full sequence is Putative ABC transporter ATP-binding protein SAV_5847 (561 aa).

The region spanning 2–243 (IRFEDVSVTY…SPVYPPVVDL (242 aa)) is the ABC transporter 1 domain. 36–43 (GPSGVGKS) contributes to the ATP binding site. Residues 268-299 (ERLAATETPTPTATATATAAPAPSPSRPRRPR) form a disordered region. Positions 272–288 (ATETPTPTATATATAAP) are enriched in low complexity. Positions 315-543 (AAVEALAVRR…SPSFAPQVTK (229 aa)) constitute an ABC transporter 2 domain. Residue 347–354 (GRNGAGKS) participates in ATP binding.

This sequence belongs to the ABC transporter superfamily.

The protein resides in the cell membrane. Probably part of an ABC transporter complex. Responsible for energy coupling to the transport system. This is Putative ABC transporter ATP-binding protein SAV_5847 from Streptomyces avermitilis (strain ATCC 31267 / DSM 46492 / JCM 5070 / NBRC 14893 / NCIMB 12804 / NRRL 8165 / MA-4680).